A 794-amino-acid chain; its full sequence is Ent-kaurene synthase 1, chloroplastic (794 aa).

The N-terminal 28 residues, 1–28, are a transit peptide targeting the chloroplast; the sequence is MSLLLSNSVLVGPKFRSSRISHASASLD. Positions 543, 547, 687, and 695 each coordinate Mg(2+). A DDXXD motif motif is present at residues 543–547; the sequence is DDFFD.

It belongs to the terpene synthase family. The cofactor is Mg(2+). In terms of tissue distribution, accumulates in leaves, and, at low levels, in germinating seeds.

The protein resides in the plastid. It is found in the chloroplast. The enzyme catalyses ent-copalyl diphosphate = ent-kaur-16-ene + diphosphate. It functions in the pathway secondary metabolite biosynthesis; terpenoid biosynthesis. It participates in plant hormone biosynthesis; gibberellin biosynthesis. In terms of biological role, involved in the biosynthesis of ent-kaurene diterpenoids natural products such as oridonin, miltiradiene, eriocalyxin B and nezukol, known to exhibit antitumor, anti-inflammatory and antibacterial activities, and in the production of gibberellins phytohormones. Catalyzes the conversion of ent-copalyl diphosphate (ent-CPP) to ent-kaurene. This chain is Ent-kaurene synthase 1, chloroplastic, found in Isodon eriocalyx (Plectranthus eriocalyx).